Reading from the N-terminus, the 193-residue chain is CD70 antigen (193 aa).

Residues 1–17 (MPEEGSGCSVRRRPYGC) are Cytoplasmic-facing. The chain crosses the membrane as a helical; Signal-anchor for type II membrane protein span at residues 18–38 (VLRAALVPLVAGLVICLVVCI). Residues 39–193 (QRFAQAQQQL…TFFGVQWVRP (155 aa)) are Extracellular-facing. The region spanning 56-191 (DVAELQLNHT…DETFFGVQWV (136 aa)) is the THD domain. The N-linked (GlcNAc...) asparagine glycan is linked to N63. 2 disulfides stabilise this stretch: C115–C151 and C133–C168. The N-linked (GlcNAc...) asparagine glycan is linked to N170.

This sequence belongs to the tumor necrosis factor family. In terms of assembly, homotrimer. N-glycosylated.

It is found in the cell membrane. In terms of biological role, expressed at the plasma membrane of B cells, it is the ligand of the CD27 receptor which is specifically expressed at the surface of T cells. The CD70-CD27 signaling pathway mediates antigen-specific T cell activation and expansion which in turn provides immune surveillance of B cells. The chain is CD70 antigen from Homo sapiens (Human).